The primary structure comprises 357 residues: Alanine racemase (357 aa).

Lysine 33 functions as the Proton acceptor; specific for D-alanine in the catalytic mechanism. Residue lysine 33 is modified to N6-(pyridoxal phosphate)lysine. Arginine 129 provides a ligand contact to substrate. The active-site Proton acceptor; specific for L-alanine is tyrosine 253. Methionine 301 provides a ligand contact to substrate.

Belongs to the alanine racemase family. Pyridoxal 5'-phosphate serves as cofactor.

It carries out the reaction L-alanine = D-alanine. The protein operates within amino-acid biosynthesis; D-alanine biosynthesis; D-alanine from L-alanine: step 1/1. Functionally, catalyzes the interconversion of L-alanine and D-alanine. May also act on other amino acids. The chain is Alanine racemase (alr) from Pseudomonas entomophila (strain L48).